We begin with the raw amino-acid sequence, 92 residues long: Small ribosomal subunit protein bS21A (92 aa).

A compositionally biased stretch (basic and acidic residues) spans 25 to 52 (GVFREMKQRRSYEKPSERKTREKSEAIR). A disordered region spans residues 25 to 92 (GVFREMKQRR…LPQTAARPAG (68 aa)).

This sequence belongs to the bacterial ribosomal protein bS21 family.

The protein is Small ribosomal subunit protein bS21A of Bradyrhizobium diazoefficiens (strain JCM 10833 / BCRC 13528 / IAM 13628 / NBRC 14792 / USDA 110).